A 544-amino-acid chain; its full sequence is Chaperonin GroEL (544 aa).

ATP-binding positions include 30–33 (TLGP), Lys-51, 87–91 (DGTTT), Gly-415, and Asp-496.

Belongs to the chaperonin (HSP60) family. In terms of assembly, forms a cylinder of 14 subunits composed of two heptameric rings stacked back-to-back. Interacts with the co-chaperonin GroES.

The protein resides in the cytoplasm. The catalysed reaction is ATP + H2O + a folded polypeptide = ADP + phosphate + an unfolded polypeptide.. Functionally, together with its co-chaperonin GroES, plays an essential role in assisting protein folding. The GroEL-GroES system forms a nano-cage that allows encapsulation of the non-native substrate proteins and provides a physical environment optimized to promote and accelerate protein folding. The polypeptide is Chaperonin GroEL (Granulibacter bethesdensis (strain ATCC BAA-1260 / CGDNIH1)).